Reading from the N-terminus, the 129-residue chain is Mini-ribonuclease 3-like protein (129 aa).

Residue aspartate 23 is part of the active site.

This sequence belongs to the MrnC RNase family.

In terms of biological role, might be a ribonuclease involved in RNA processing. This is Mini-ribonuclease 3-like protein (mrnCL) from Fusobacterium nucleatum subsp. nucleatum (strain ATCC 25586 / DSM 15643 / BCRC 10681 / CIP 101130 / JCM 8532 / KCTC 2640 / LMG 13131 / VPI 4355).